Consider the following 134-residue polypeptide: ATP synthase epsilon chain (134 aa).

The protein belongs to the ATPase epsilon chain family. F-type ATPases have 2 components, CF(1) - the catalytic core - and CF(0) - the membrane proton channel. CF(1) has five subunits: alpha(3), beta(3), gamma(1), delta(1), epsilon(1). CF(0) has three main subunits: a, b and c.

The protein resides in the cellular thylakoid membrane. Functionally, produces ATP from ADP in the presence of a proton gradient across the membrane. The sequence is that of ATP synthase epsilon chain from Prochlorococcus marinus (strain AS9601).